The chain runs to 485 residues: Glutamyl-tRNA(Gln) amidotransferase subunit A (485 aa).

Residues Lys76 and Ser155 each act as charge relay system in the active site. Ser179 functions as the Acyl-ester intermediate in the catalytic mechanism.

This sequence belongs to the amidase family. GatA subfamily. As to quaternary structure, heterotrimer of A, B and C subunits.

It catalyses the reaction L-glutamyl-tRNA(Gln) + L-glutamine + ATP + H2O = L-glutaminyl-tRNA(Gln) + L-glutamate + ADP + phosphate + H(+). Allows the formation of correctly charged Gln-tRNA(Gln) through the transamidation of misacylated Glu-tRNA(Gln) in organisms which lack glutaminyl-tRNA synthetase. The reaction takes place in the presence of glutamine and ATP through an activated gamma-phospho-Glu-tRNA(Gln). The protein is Glutamyl-tRNA(Gln) amidotransferase subunit A of Marinobacter nauticus (strain ATCC 700491 / DSM 11845 / VT8) (Marinobacter aquaeolei).